The sequence spans 194 residues: Naphthalene 1,2-dioxygenase system, small oxygenase component (194 aa).

This sequence belongs to the bacterial ring-hydroxylating dioxygenase beta subunit family. The naphthalene dioxygenase (NDO) multicomponent enzyme system is composed of an electron transfer component and a dioxygenase component (iron sulfur protein (ISP)). The electron transfer component is composed of a ferredoxin reductase (NagAa) and a ferredoxin (NagAb), and the dioxygenase component is formed by a large alpha subunit (NagAc) and a small beta subunit (NagAd).

It functions in the pathway aromatic compound metabolism; naphthalene degradation. Its function is as follows. Component of the naphthalene dioxygenase (NDO) multicomponent enzyme system which catalyzes the incorporation of both atoms of molecular oxygen into naphthalene to form cis-(1R,2S)-dihydroxy-1,2-dihydronaphthalene. Also able to use styrene as substrate. The beta subunit seems to have a structural role in the holoenzyme. In Ralstonia sp, this protein is Naphthalene 1,2-dioxygenase system, small oxygenase component.